A 448-amino-acid chain; its full sequence is MGKYFGTDGFRGEANKTLTVEHAYKVGRFLGWYYGKDHKAKVAIGKDTRRSSYMFEYSLVAGLTASGADVYLLHVTPTPSVSYVVRSEGFDCGIMISASHNPFQDNGIKVINGGGYKLENEVEKLIEDYIDGEIPEIPFAFGENIGKTVDYSMGRHRYIGHLISLATRSFKGIKVGLDLANGSATTVAKGVFDALGAKTYVIHGEPDGVNINSDCGSTHIEQLQKFVVEQGLDIGFAYDGDADRCLAVDELGQVIDGDAILYLCGCYMKERGELRNNTVVTTIMSNLGLYKSLDAKEIGYAKTAVGDKYVFENMMEHGHSIGGEQSGHIIFNKHATTGDGVLTSLKIMEVMLEKKEKISVLLRELKIYPQLLLNIPVVDKKMAKNDPDVMEAAKAVELELGDEGRILVRESGTESVIRVMVEAGSNEVCQKYADNVVVVLRQKGHIKA.

Ser-99 acts as the Phosphoserine intermediate in catalysis. 4 residues coordinate Mg(2+): Ser-99, Asp-239, Asp-241, and Asp-243. Phosphoserine is present on Ser-99.

Belongs to the phosphohexose mutase family. Mg(2+) serves as cofactor. Activated by phosphorylation.

The catalysed reaction is alpha-D-glucosamine 1-phosphate = D-glucosamine 6-phosphate. Functionally, catalyzes the conversion of glucosamine-6-phosphate to glucosamine-1-phosphate. In Lachnoclostridium phytofermentans (strain ATCC 700394 / DSM 18823 / ISDg) (Clostridium phytofermentans), this protein is Phosphoglucosamine mutase.